A 363-amino-acid polypeptide reads, in one-letter code: DNA replication and repair protein RecF (363 aa).

Residue 31–38 (GANSSGKT) coordinates ATP.

This sequence belongs to the RecF family.

It is found in the cytoplasm. Functionally, the RecF protein is involved in DNA metabolism; it is required for DNA replication and normal SOS inducibility. RecF binds preferentially to single-stranded, linear DNA. It also seems to bind ATP. This is DNA replication and repair protein RecF from Nitrosococcus oceani (strain ATCC 19707 / BCRC 17464 / JCM 30415 / NCIMB 11848 / C-107).